Reading from the N-terminus, the 192-residue chain is Per os infectivity factor 6 (192 aa).

The chain crosses the membrane as a helical span at residues 154 to 174; it reads IAYVFLFFICIVLLSVLAVFF.

Its subcellular location is the host membrane. It localises to the virion. The protein localises to the host cytoplasm. The protein resides in the host nucleus. Its function is as follows. Per os infectivity factor. This is Per os infectivity factor 6 (AC68) from Autographa californica nuclear polyhedrosis virus (AcMNPV).